Reading from the N-terminus, the 170-residue chain is Double homeobox protein 1 (170 aa).

2 DNA-binding regions (homeobox) span residues 19 to 78 (GRRM…LRQH) and 94 to 153 (GRRK…RGQS). Positions 75-100 (LRQHRRQSRPWPGRRDPQKGRRKRTA) are disordered.

It belongs to the paired homeobox family. As to expression, expressed in rhabdomyosarcoma TE671 cells as well as in several other normal and cancer cells.

Its subcellular location is the nucleus. In terms of biological role, probable transcription activator. Binds the P5 DNA element sequence 5'-GATCTGAGTCTAATTGAGAATTACTGTAC-3'. The polypeptide is Double homeobox protein 1 (DUX1) (Homo sapiens (Human)).